We begin with the raw amino-acid sequence, 112 residues long: Integration host factor subunit alpha (112 aa).

This sequence belongs to the bacterial histone-like protein family. Heterodimer of an alpha and a beta chain.

Functionally, this protein is one of the two subunits of integration host factor, a specific DNA-binding protein that functions in genetic recombination as well as in transcriptional and translational control. The sequence is that of Integration host factor subunit alpha from Agrobacterium fabrum (strain C58 / ATCC 33970) (Agrobacterium tumefaciens (strain C58)).